The following is a 468-amino-acid chain: Methionine aminopeptidase 2 (468 aa).

Residues 63 to 74 show a composition bias toward basic and acidic residues; sequence AAKEATKKDAKG. A disordered region spans residues 63-87; the sequence is AAKEATKKDAKGGKGKANGSAAATA. His219 contributes to the substrate binding site. A divalent metal cation contacts are provided by Asp239, Asp250, and His319. His327 contributes to the substrate binding site. A divalent metal cation-binding residues include Glu352 and Glu449.

Belongs to the peptidase M24A family. Methionine aminopeptidase eukaryotic type 2 subfamily. Co(2+) serves as cofactor. It depends on Zn(2+) as a cofactor. The cofactor is Mn(2+). Fe(2+) is required as a cofactor.

It localises to the cytoplasm. It carries out the reaction Release of N-terminal amino acids, preferentially methionine, from peptides and arylamides.. With respect to regulation, inhibited by the fumagillin analog, TNP-470. Functionally, cotranslationally removes the N-terminal methionine from nascent proteins. The N-terminal methionine is often cleaved when the second residue in the primary sequence is small and uncharged (Met-Ala-, Cys, Gly, Pro, Ser, Thr, or Val). Required for germ cell proliferation and/or differentiation. This is Methionine aminopeptidase 2 from Caenorhabditis elegans.